The following is a 320-amino-acid chain: Beta-ketoacyl-[acyl-carrier-protein] synthase III (320 aa).

Residues Cys114 and His247 contribute to the active site. An ACP-binding region spans residues 248 to 252; it reads QANRR. Asn277 is a catalytic residue.

This sequence belongs to the thiolase-like superfamily. FabH family. In terms of assembly, homodimer.

It is found in the cytoplasm. It carries out the reaction malonyl-[ACP] + acetyl-CoA + H(+) = 3-oxobutanoyl-[ACP] + CO2 + CoA. Its pathway is lipid metabolism; fatty acid biosynthesis. Catalyzes the condensation reaction of fatty acid synthesis by the addition to an acyl acceptor of two carbons from malonyl-ACP. Catalyzes the first condensation reaction which initiates fatty acid synthesis and may therefore play a role in governing the total rate of fatty acid production. Possesses both acetoacetyl-ACP synthase and acetyl transacylase activities. Its substrate specificity determines the biosynthesis of branched-chain and/or straight-chain of fatty acids. The protein is Beta-ketoacyl-[acyl-carrier-protein] synthase III of Neisseria meningitidis serogroup B (strain ATCC BAA-335 / MC58).